The chain runs to 357 residues: Probable cinnamyl alcohol dehydrogenase 2 (357 aa).

Zn(2+) is bound at residue Cys47. Ser49 contributes to the NADP(+) binding site. The Zn(2+) site is built by His69, Glu70, Cys100, Cys103, Cys106, Cys114, and Cys163. Residues Thr167, 188-193 (GLGGVG), 211-216 (SSSNKK), Thr251, Gly275, and 298-300 (SFI) contribute to the NADP(+) site.

This sequence belongs to the zinc-containing alcohol dehydrogenase family. Homodimer. It depends on Zn(2+) as a cofactor. Post-translationally, the N-terminus is blocked.

The catalysed reaction is (E)-cinnamyl alcohol + NADP(+) = (E)-cinnamaldehyde + NADPH + H(+). It carries out the reaction (E)-coniferol + NADP(+) = (E)-coniferaldehyde + NADPH + H(+). The enzyme catalyses (E)-sinapyl alcohol + NADP(+) = (E)-sinapaldehyde + NADPH + H(+). It catalyses the reaction (E)-4-coumaroyl alcohol + NADP(+) = (E)-4-coumaraldehyde + NADPH + H(+). The catalysed reaction is (E)-caffeyl alcohol + NADP(+) = (E)-caffeyl aldehyde + NADPH + H(+). It functions in the pathway aromatic compound metabolism; phenylpropanoid biosynthesis. Functionally, involved in lignin biosynthesis. Catalyzes the final step specific for the production of lignin monomers. Catalyzes the NADPH-dependent reduction of coniferaldehyde, 5-hydroxyconiferaldehyde, sinapaldehyde, 4-coumaraldehyde and caffeyl aldehyde to their respective alcohols. The polypeptide is Probable cinnamyl alcohol dehydrogenase 2 (CAD19) (Nicotiana tabacum (Common tobacco)).